The sequence spans 298 residues: Probable prolyl 4-hydroxylase 4 (298 aa).

The Cytoplasmic segment spans residues 1 to 6 (MARRGL). The helical; Signal-anchor for type II membrane protein transmembrane segment at 7 to 25 (LISFFAIFSVLLQSSTSLI) threads the bilayer. Topologically, residues 26-298 (SSSSVFVNPS…GYCRRSCKAC (273 aa)) are lumenal. A glycan (N-linked (GlcNAc...) asparagine) is linked at Asn-77. One can recognise a Fe2OG dioxygenase domain in the interval 120 to 245 (NGEDIQVLRY…KWSATKWIHV (126 aa)). His-138 and Asp-140 together coordinate Fe cation. A glycan (N-linked (GlcNAc...) asparagine) is linked at Asn-164. His-226 contacts Fe cation. Lys-236 is a 2-oxoglutarate binding site. Residues Asn-257 and Asn-262 are each glycosylated (N-linked (GlcNAc...) asparagine). The ShKT domain maps to 258 to 298 (CTDMNESCERWAVLGECTKNPEYMVGTTELPGYCRRSCKAC). Intrachain disulfides connect Cys-258–Cys-298, Cys-265–Cys-291, and Cys-274–Cys-295.

This sequence belongs to the P4HA family. The cofactor is Fe(2+). Requires L-ascorbate as cofactor.

Its subcellular location is the endoplasmic reticulum membrane. It carries out the reaction L-prolyl-[collagen] + 2-oxoglutarate + O2 = trans-4-hydroxy-L-prolyl-[collagen] + succinate + CO2. In terms of biological role, catalyzes the post-translational formation of 4-hydroxyproline in -Xaa-Pro-Gly- sequences in proline-rich peptide sequences of plant glycoproteins and other proteins. Hydroxyprolines are important constituent of many plant cell wall glycoproteins such as extensins, hydroxyproline-rich glycoproteins, lectins and arabinogalactan proteins. This Arabidopsis thaliana (Mouse-ear cress) protein is Probable prolyl 4-hydroxylase 4.